A 283-amino-acid polypeptide reads, in one-letter code: Glutamate racemase (283 aa).

Residues 7–8 (DS) and 39–40 (YG) contribute to the substrate site. The active-site Proton donor/acceptor is the Cys-70. 71–72 (NT) is a binding site for substrate. Cys-206 (proton donor/acceptor) is an active-site residue. 207-208 (TH) serves as a coordination point for substrate.

It belongs to the aspartate/glutamate racemases family.

It catalyses the reaction L-glutamate = D-glutamate. Its pathway is cell wall biogenesis; peptidoglycan biosynthesis. Provides the (R)-glutamate required for cell wall biosynthesis. The sequence is that of Glutamate racemase from Caulobacter sp. (strain K31).